A 569-amino-acid polypeptide reads, in one-letter code: Glutamate--tRNA ligase, chloroplastic/mitochondrial (569 aa).

An L-glutamate-binding site is contributed by 59 to 61 (RFA). Residues 62–72 (PSPTGNLHVGG) carry the 'HIGH' region motif. An ATP-binding site is contributed by H69. Residues E95, 247–251 (YNFCV), and R265 contribute to the L-glutamate site. Residues E268 and 303 to 307 (KLSKR) each bind ATP. Residues 303–307 (KLSKR) carry the 'KMSKS' region motif.

This sequence belongs to the class-I aminoacyl-tRNA synthetase family. Glutamate--tRNA ligase type 1 subfamily.

It localises to the plastid. The protein localises to the chloroplast. The protein resides in the mitochondrion. It carries out the reaction tRNA(Glu) + L-glutamate + ATP = L-glutamyl-tRNA(Glu) + AMP + diphosphate. Catalyzes the attachment of glutamate to tRNA(Glu) in a two-step reaction: glutamate is first activated by ATP to form Glu-AMP and then transferred to the acceptor end of tRNA(Glu). The sequence is that of Glutamate--tRNA ligase, chloroplastic/mitochondrial from Nicotiana tabacum (Common tobacco).